The primary structure comprises 412 residues: MASSRISLRLVRRFASAAADGTTTAPSSGKISVSKAKSTLRKEHDPDKALKIYANVSDHSASPVSSRYAQELTVRRLAKCRRFSDIETLIESHKNDPKIKEEPFYSTLIRSYGQASMFNHAMRTFEQMDQYGTPRSAVSFNALLNACLHSKNFDKVPQLFDEIPQRYNKIIPDKISYGILIKSYCDSGTPEKAIEIMRQMQGKGMEVTTIAFTTILSSLYKKGELEVADNLWNEMVKKGCELDNAAYNVRIMSAQKESPERVKELIEEMSSMGLKPDTISYNYLMTAYCERGMLDEAKKVYEGLEGNNCAPNAATFRTLIFHLCYSRLYEQGYAIFKKSVYMHKIPDFNTLKHLVVGLVENKKRDDAKGLIRTVKKKFPPSFLNAWKKLEEELGLYSKTDAFPSSAKEAAAA.

The N-terminal 14 residues, 1–14, are a transit peptide targeting the mitochondrion; the sequence is MASSRISLRLVRRF. The span at 21-37 shows a compositional bias: polar residues; it reads GTTTAPSSGKISVSKAK. The segment at 21–43 is disordered; that stretch reads GTTTAPSSGKISVSKAKSTLRKE. PPR repeat units lie at residues 101–135, 136–166, 173–207, 208–242, 243–276, 277–311, 312–346, and 347–377; these read EEPF…GTPR, SAVS…IPQR, DKIS…GMEV, TTIA…GCEL, DNAA…GLKP, DTIS…NCAP, NAAT…HKIP, and DFNT…VKKK.

It belongs to the PPR family. P subfamily. In terms of assembly, component of the mitochondrial ribosome small subunit.

Its subcellular location is the mitochondrion. The sequence is that of Small ribosomal subunit protein mL103 (rPPR7) from Arabidopsis thaliana (Mouse-ear cress).